Reading from the N-terminus, the 266-residue chain is Enterotoxin type C-2 (266 aa).

The N-terminal stretch at 1-27 is a signal peptide; sequence MNKSRFISCVILIFALILVLFTPNVLA. Residues aspartate 36, histidine 74, glutamate 98, glutamate 107, and aspartate 110 each contribute to the Zn(2+) site. The cysteines at positions 120 and 137 are disulfide-linked. Histidine 145, glutamate 146, and histidine 149 together coordinate Zn(2+).

This sequence belongs to the staphylococcal/streptococcal toxin family. As to quaternary structure, interacts with host MHC class II molecules composed of alpha/HLA-DRA and beta/HLA-DRB1 chains. Zn(2+) serves as cofactor.

It localises to the secreted. Its function is as follows. Staphylococcal enterotoxin that activates the host immune system by binding as unprocessed molecules to major histocompatibility (MHC) complex class II and T-cell receptor (TCR) molecules. In turn, this ternary complex activates a large number of T-lymphocytes initiating a systemic release of pro-inflammatory cytokines. Also causes the intoxication staphylococcal food poisoning syndrome. The chain is Enterotoxin type C-2 (entC2) from Staphylococcus aureus.